The sequence spans 286 residues: 2-hydroxy-6-oxo-6-phenylhexa-2,4-dienoate hydrolase (286 aa).

Positions 36-271 (VIMLHGGGPG…KCGHWAQWEH (236 aa)) constitute an AB hydrolase-1 domain. Substrate is bound by residues 42 to 43 (GG), N51, N111, S180, and R190. The Proton acceptor role is filled by H265. Residue W266 coordinates substrate.

The protein belongs to the AB hydrolase superfamily. BphD family. As to quaternary structure, homodimer.

The enzyme catalyses 2,6-dioxo-6-phenylhexa-3-enoate + H2O = 2-oxopent-4-enoate + benzoate + H(+). It participates in xenobiotic degradation; biphenyl degradation; 2-hydroxy-2,4-pentadienoate and benzoate from biphenyl: step 4/4. Its function is as follows. Catalyzes an unusual C-C bond hydrolysis of 2-hydroxy-6-oxo-6-phenylhexa-2,4-dienoic acid (HOPDA) to produce benzoic acid and 2-hydroxy-2,4-pentadienoic acid (HPD). The chain is 2-hydroxy-6-oxo-6-phenylhexa-2,4-dienoate hydrolase (bphD) from Metapseudomonas furukawaii (Pseudomonas furukawaii).